Reading from the N-terminus, the 696-residue chain is PWWP domain-containing DNA repair factor 3B (696 aa).

2 stretches are compositionally biased toward polar residues: residues 119-128 (QNVPQKQSDS) and 290-300 (CLDTSQNQPSM). 2 disordered regions span residues 119 to 143 (QNVP…DLPG) and 278 to 303 (NIED…MESE). Serine 128 carries the post-translational modification Phosphoserine. The region spanning 392–453 (TGMIVWFKYQ…KKFDCKEKQM (62 aa)) is the PWWP domain.

This sequence belongs to the PWWP3A family.

The polypeptide is PWWP domain-containing DNA repair factor 3B (Homo sapiens (Human)).